Reading from the N-terminus, the 463-residue chain is Zinc finger protein interacting with ribonucleoprotein K (463 aa).

In terms of domain architecture, KRAB spans 14 to 89 (VTFQDVAICF…PKTNLCEKCV (76 aa)). Disordered regions lie at residues 106–128 (HSTE…KPLE) and 171–211 (KYRK…TSNG). Basic and acidic residues predominate over residues 174–191 (KSTEGRKETSHESDKSEE). Residues 192–201 (CQSLSSQKQT) are compositionally biased toward polar residues. 9 consecutive C2H2-type zinc fingers follow at residues 215–237 (YECS…QRVH), 243–265 (WECR…RRIH), 271–293 (YECS…QKTH), 299–321 (YECS…KRVH), 327–349 (YKCS…RRIH), 355–377 (YECR…QRVH), 383–405 (YKCS…RRIH), 411–433 (YECS…QVVH), and 439–461 (YECD…QKCH).

Belongs to the krueppel C2H2-type zinc-finger protein family. As to quaternary structure, interacts with HNRPK. As to expression, expressed in ovary and liver, and at lower levels in brain and muscle.

The protein localises to the nucleus. Its function is as follows. May be a transcriptional repressor. The chain is Zinc finger protein interacting with ribonucleoprotein K (Zik1) from Mus musculus (Mouse).